Here is an 87-residue protein sequence, read N- to C-terminus: Exendin-3 (87 aa).

A signal peptide spans 1–21 (MKIILWLCVFGLFLATLFPVS). Positions 22-45 (WQMPVESGLSSEDSASSESFASKI) are excised as a propeptide. The residue at position 86 (Ser86) is a Serine amide.

This sequence belongs to the glucagon family. Expressed by the venom gland.

The protein resides in the secreted. In terms of biological role, stimulates vasoactive intestinal peptide (VIP) receptors in high concentrations (&gt;100 nM), resulting in both an increase in cAMP and amylase secretion from pancreatic acini, although at low concentrations (between 0.3 and 3 nM) it increases cAMP without stimulating amylase release. Stimulates the GLP-1 receptor (GLP1R). Induces hypotension that is mediated by relaxation of cardiac smooth muscle. The chain is Exendin-3 from Heloderma horridum horridum (Mexican beaded lizard).